We begin with the raw amino-acid sequence, 196 residues long: Putative NADH dehydrogenase/NAD(P)H nitroreductase XCV0587 (196 aa).

The protein belongs to the nitroreductase family. HadB/RutE subfamily. The cofactor is FMN.

The polypeptide is Putative NADH dehydrogenase/NAD(P)H nitroreductase XCV0587 (Xanthomonas euvesicatoria pv. vesicatoria (strain 85-10) (Xanthomonas campestris pv. vesicatoria)).